Consider the following 388-residue polypeptide: LL-diaminopimelate aminotransferase (388 aa).

Substrate contacts are provided by Tyr-16 and Gly-41. Pyridoxal 5'-phosphate contacts are provided by residues Tyr-70, 104 to 105, Tyr-129, Asn-179, Tyr-210, and 239 to 241; these read SK and SLS. Substrate is bound by residues Lys-105, Tyr-129, and Asn-179. Lys-242 is modified (N6-(pyridoxal phosphate)lysine). Pyridoxal 5'-phosphate is bound at residue Arg-250. Arg-368 is a substrate binding site.

It belongs to the class-I pyridoxal-phosphate-dependent aminotransferase family. LL-diaminopimelate aminotransferase subfamily. In terms of assembly, homodimer. The cofactor is pyridoxal 5'-phosphate.

The catalysed reaction is (2S,6S)-2,6-diaminopimelate + 2-oxoglutarate = (S)-2,3,4,5-tetrahydrodipicolinate + L-glutamate + H2O + H(+). It functions in the pathway amino-acid biosynthesis; L-lysine biosynthesis via DAP pathway; LL-2,6-diaminopimelate from (S)-tetrahydrodipicolinate (aminotransferase route): step 1/1. Involved in the synthesis of meso-diaminopimelate (m-DAP or DL-DAP), required for both lysine and peptidoglycan biosynthesis. Catalyzes the direct conversion of tetrahydrodipicolinate to LL-diaminopimelate. This is LL-diaminopimelate aminotransferase from Nitratidesulfovibrio vulgaris (strain ATCC 29579 / DSM 644 / CCUG 34227 / NCIMB 8303 / VKM B-1760 / Hildenborough) (Desulfovibrio vulgaris).